Reading from the N-terminus, the 171-residue chain is Co-chaperone protein HscB homolog (171 aa).

The 73-residue stretch at 2 to 74 (NHFELFGLPS…ISRAEYILAE (73 aa)) folds into the J domain.

The protein belongs to the HscB family. Interacts with HscA and stimulates its ATPase activity.

Co-chaperone involved in the maturation of iron-sulfur cluster-containing proteins. Seems to help targeting proteins to be folded toward HscA. The polypeptide is Co-chaperone protein HscB homolog (Vibrio parahaemolyticus serotype O3:K6 (strain RIMD 2210633)).